The chain runs to 158 residues: Putative pre-16S rRNA nuclease (158 aa).

The protein belongs to the YqgF nuclease family.

Its subcellular location is the cytoplasm. Functionally, could be a nuclease involved in processing of the 5'-end of pre-16S rRNA. The polypeptide is Putative pre-16S rRNA nuclease (Paracoccus denitrificans (strain Pd 1222)).